Here is a 479-residue protein sequence, read N- to C-terminus: Aspartyl/glutamyl-tRNA(Asn/Gln) amidotransferase subunit B (479 aa).

This sequence belongs to the GatB/GatE family. GatB subfamily. Heterotrimer of A, B and C subunits.

It catalyses the reaction L-glutamyl-tRNA(Gln) + L-glutamine + ATP + H2O = L-glutaminyl-tRNA(Gln) + L-glutamate + ADP + phosphate + H(+). It carries out the reaction L-aspartyl-tRNA(Asn) + L-glutamine + ATP + H2O = L-asparaginyl-tRNA(Asn) + L-glutamate + ADP + phosphate + 2 H(+). In terms of biological role, allows the formation of correctly charged Asn-tRNA(Asn) or Gln-tRNA(Gln) through the transamidation of misacylated Asp-tRNA(Asn) or Glu-tRNA(Gln) in organisms which lack either or both of asparaginyl-tRNA or glutaminyl-tRNA synthetases. The reaction takes place in the presence of glutamine and ATP through an activated phospho-Asp-tRNA(Asn) or phospho-Glu-tRNA(Gln). In Deinococcus radiodurans (strain ATCC 13939 / DSM 20539 / JCM 16871 / CCUG 27074 / LMG 4051 / NBRC 15346 / NCIMB 9279 / VKM B-1422 / R1), this protein is Aspartyl/glutamyl-tRNA(Asn/Gln) amidotransferase subunit B.